A 287-amino-acid chain; its full sequence is Inositol diphosphatase siw14 (287 aa).

The Tyrosine-protein phosphatase domain maps to 85–256; that stretch reads NFGVVYPGII…LNDLKRYISD (172 aa). Phosphoserine occurs at positions 156 and 159. The active-site Phosphocysteine intermediate is Cys-189.

This sequence belongs to the protein-tyrosine phosphatase family. Atypical dual-specificity phosphatase Siw14-like subfamily.

It localises to the cytoplasm. The protein resides in the nucleus. It catalyses the reaction 5-diphospho-1D-myo-inositol 1,2,3,4,6-pentakisphosphate + H2O = 1D-myo-inositol hexakisphosphate + phosphate + H(+). It carries out the reaction 1-diphospho-1D-myo-inositol 2,3,4,5,6-pentakisphosphate + H2O = 1D-myo-inositol hexakisphosphate + phosphate + H(+). The enzyme catalyses 1,5-bis(diphospho)-1D-myo-inositol 2,3,4,6-tetrakisphosphate + H2O = 1-diphospho-1D-myo-inositol 2,3,4,5,6-pentakisphosphate + phosphate + 2 H(+). Activity is inhibited by the reaction product inorganic phosphate and by sulfate (a phosphate mimetic). Not inhibited by magnesium. Its function is as follows. Cleaves the beta-phosphate at the 1- and 5-position of soluble inositol pyrophosphates. Has exopolyphosphatase activity in vitro but does not appear to contribute to the homeostasis of cellular polyphosphate. The polypeptide is Inositol diphosphatase siw14 (Schizosaccharomyces pombe (strain 972 / ATCC 24843) (Fission yeast)).